Consider the following 298-residue polypeptide: Acetylglutamate kinase (298 aa).

Residues 69-70, Arg-91, and Asn-196 contribute to the substrate site; that span reads GG.

It belongs to the acetylglutamate kinase family. ArgB subfamily.

The protein resides in the cytoplasm. The enzyme catalyses N-acetyl-L-glutamate + ATP = N-acetyl-L-glutamyl 5-phosphate + ADP. It functions in the pathway amino-acid biosynthesis; L-arginine biosynthesis; N(2)-acetyl-L-ornithine from L-glutamate: step 2/4. In terms of biological role, catalyzes the ATP-dependent phosphorylation of N-acetyl-L-glutamate. This chain is Acetylglutamate kinase, found in Nitrobacter winogradskyi (strain ATCC 25391 / DSM 10237 / CIP 104748 / NCIMB 11846 / Nb-255).